The primary structure comprises 415 residues: uncharacterized protein (415 aa).

Positions 1-52 constitute a TRAM domain; sequence MQDLTINAIGAQGDGLARTADGKPAFVPLTLPGEVVRAKMDGARGEVVEILA. 4 residues coordinate [4Fe-4S] cluster: C62, C68, C71, and C147. Residues Q252, Y279, E299, and D347 each coordinate S-adenosyl-L-methionine. The active-site Nucleophile is C373.

The protein belongs to the class I-like SAM-binding methyltransferase superfamily. RNA M5U methyltransferase family.

This is an uncharacterized protein from Caulobacter vibrioides (strain ATCC 19089 / CIP 103742 / CB 15) (Caulobacter crescentus).